Reading from the N-terminus, the 98-residue chain is Carboxysome shell protein CsoS1C (98 aa).

The BMC domain maps to 8–93 (ALGMIETRGL…VHSEVENILP (86 aa)).

It belongs to the bacterial microcompartments protein family. CsoS1 subfamily. In terms of assembly, homohexamer with a small central pore. Interacts with the N-terminus (residues 1-136) of RuBisCO (CbbL).

Its subcellular location is the carboxysome. One of shell proteins of the carboxysome, a polyhedral inclusion where RuBisCO (ribulose bisphosphate carboxylase, ccbL-ccbS) is sequestered. Assembles into hexamers which make sheets that form the facets of the polyhedral carboxysome. The shell probably limits the diffusion of CO(2) into and out of the carboxysome. There are estimated to be 2970 CsoS1A/CsoS1C proteins per carboxysome (the proteins differ by only 1 residue). Functionally, unlike beta-carboxysomes, alpha-carboxysomes (Cb) can form without cargo protein. CsoS2 is essential for Cb formation and is also capable of targeting foreign proteins to the Cb. The Cb shell assembles with the aid of CsoS2; CsoS1A, CsoS1B and CsoS1C form the majority of the shell while CsoS4A and CsoS4B form vertices. CsoS1D forms pseudohexamers that probably control metabolite flux into and out of the shell. This chain is Carboxysome shell protein CsoS1C, found in Halothiobacillus neapolitanus (strain ATCC 23641 / c2) (Thiobacillus neapolitanus).